The primary structure comprises 314 residues: Olfactory receptor 5P76 (314 aa).

The Extracellular portion of the chain corresponds to 1–28; the sequence is MAFLEDGNHTAVTGFILLGLTDDPVLRV. Asparagine 8 is a glycosylation site (N-linked (GlcNAc...) asparagine). Residues 29-49 form a helical membrane-spanning segment; the sequence is VLFVIILCIYLVTVSGNLSTI. Topologically, residues 50 to 57 are cytoplasmic; it reads LLIRVSSQ. Residues 58 to 78 traverse the membrane as a helical segment; that stretch reads LHHPMYFFLSHLASADIGYSS. At 79–102 the chain is on the extracellular side; it reads SVTPNMLVNFLVERNTISYLGCGI. The cysteines at positions 100 and 192 are disulfide-linked. A helical membrane pass occupies residues 103-123; the sequence is QLGSAVFFGTVECFLLAAMAY. Topologically, residues 124–136 are cytoplasmic; the sequence is DRFIAICSPLLYS. The helical transmembrane segment at 137 to 157 threads the bilayer; it reads NKMSTQVCVQLLVGSYIGGFL. Residues 158 to 199 are Extracellular-facing; it reads NASSFTLSFFSLVFCGPNRVNHFFCDFAPLVKLSCSDVSVPA. Residues 200 to 220 traverse the membrane as a helical segment; it reads VVPSFTAGSIIIVTIFVIAVS. Over 221–240 the chain is Cytoplasmic; sequence YIYILITILKMRSTEGRQKA. Residues 241-261 form a helical membrane-spanning segment; it reads FSTCTSHLTAVTLFYGTITFI. Over 262–274 the chain is Extracellular; the sequence is YVMPKSSYSTDQN. The chain crosses the membrane as a helical span at residues 275 to 295; the sequence is KVVSVFYMVVVPMLNPLIYSL. At 296–314 the chain is on the cytoplasmic side; that stretch reads RNKEIKGALKRQLAKNTFS.

Belongs to the G-protein coupled receptor 1 family.

The protein localises to the cell membrane. Its function is as follows. Potential odorant receptor. This Mus musculus (Mouse) protein is Olfactory receptor 5P76.